Here is a 433-residue protein sequence, read N- to C-terminus: Aspartate--tRNA(Asp/Asn) ligase (433 aa).

L-aspartate is bound at residue glutamate 167. An aspartate region spans residues 189–192 (QLFK). Position 211 (arginine 211) interacts with L-aspartate. Residues 211-213 (RAE), 219-221 (RHL), and glutamate 356 contribute to the ATP site. Mg(2+)-binding residues include glutamate 356 and serine 359. L-aspartate contacts are provided by serine 359 and arginine 363. Position 404–407 (404–407 (GGER)) interacts with ATP.

It belongs to the class-II aminoacyl-tRNA synthetase family. Type 2 subfamily. In terms of assembly, homodimer. It depends on Mg(2+) as a cofactor.

The protein resides in the cytoplasm. The catalysed reaction is tRNA(Asx) + L-aspartate + ATP = L-aspartyl-tRNA(Asx) + AMP + diphosphate. In terms of biological role, aspartyl-tRNA synthetase with relaxed tRNA specificity since it is able to aspartylate not only its cognate tRNA(Asp) but also tRNA(Asn). Reaction proceeds in two steps: L-aspartate is first activated by ATP to form Asp-AMP and then transferred to the acceptor end of tRNA(Asp/Asn). The polypeptide is Aspartate--tRNA(Asp/Asn) ligase (Haloferax volcanii (Halobacterium volcanii)).